A 421-amino-acid polypeptide reads, in one-letter code: WD repeat and SOCS box-containing protein 1 (421 aa).

5 WD repeats span residues 124–165 (SRCV…LLLN), 168–208 (DHIE…NMVK), 212–251 (AHQN…MIRK), 254–293 (GHHH…LLME), and 309–346 (ANDR…DCPV). The SOCS box domain occupies 372 to 421 (DGSVYFWATPRQVPSLQHICRMSIRRVMSTQEVQKLPVPSKILAFLSYRG).

In terms of assembly, interacts with DIO2. Component of the probable ECS(WSB1) E3 ubiquitin-protein ligase complex which contains CUL5, RNF7/RBX2, Elongin BC complex and WSB1. Component of a probable ECS-like E3 ubiquitin-protein ligase complex which contains CUL5, RBX1, Elongin BC complex and WSB1. Interacts with CUL5, RNF7, ELOB and ELOC. Binds to HIPK2 through WD40 repeats.

Its pathway is protein modification; protein ubiquitination. In terms of biological role, probable substrate-recognition component of a SCF-like ECS (Elongin-Cullin-SOCS-box protein) E3 ubiquitin ligase complex which mediates the ubiquitination and subsequent proteasomal degradation of target proteins. Recognizes type II iodothyronine deiodinase/DIO2. Confers constitutive instability to HIPK2 through proteasomal degradation. The protein is WD repeat and SOCS box-containing protein 1 (Wsb1) of Mus musculus (Mouse).